The sequence spans 214 residues: Superoxide dismutase [Mn/Fe] (214 aa).

Fe(3+)-binding residues include H31, H79, D165, and H169. Residues H31, H79, D165, and H169 each coordinate Mn(2+).

The protein belongs to the iron/manganese superoxide dismutase family. The cofactor is Mn(2+). Requires Fe(3+) as cofactor.

It catalyses the reaction 2 superoxide + 2 H(+) = H2O2 + O2. In terms of biological role, destroys superoxide anion radicals which are normally produced within the cells and which are toxic to biological systems. Catalyzes the dismutation of superoxide anion radicals into O2 and H2O2 by successive reduction and oxidation of the transition metal ion at the active site. This chain is Superoxide dismutase [Mn/Fe] (sod), found in Aeropyrum pernix (strain ATCC 700893 / DSM 11879 / JCM 9820 / NBRC 100138 / K1).